A 41-amino-acid chain; its full sequence is Photosystem I reaction center subunit IX (41 aa).

A helical membrane pass occupies residues 7–27 (YLSTAPVIALAWMSFTAGLLI).

The protein belongs to the PsaJ family.

Its subcellular location is the plastid. The protein localises to the chloroplast thylakoid membrane. Its function is as follows. May help in the organization of the PsaE and PsaF subunits. In Tupiella akineta (Green alga), this protein is Photosystem I reaction center subunit IX.